Here is a 220-residue protein sequence, read N- to C-terminus: Uracil-DNA glycosylase 1 (220 aa).

The Proton acceptor role is filled by D65.

It belongs to the uracil-DNA glycosylase (UDG) superfamily. UNG family.

The protein resides in the cytoplasm. It catalyses the reaction Hydrolyzes single-stranded DNA or mismatched double-stranded DNA and polynucleotides, releasing free uracil.. Functionally, excises uracil residues from the DNA which can arise as a result of misincorporation of dUMP residues by DNA polymerase or due to deamination of cytosine. This Bacteroides fragilis (strain YCH46) protein is Uracil-DNA glycosylase 1.